The primary structure comprises 302 residues: Aspartate carbamoyltransferase catalytic subunit (302 aa).

2 residues coordinate carbamoyl phosphate: R53 and T54. Residue K82 participates in L-aspartate binding. Residues R103, H131, and Q134 each coordinate carbamoyl phosphate. L-aspartate-binding residues include R164 and R223. L260 and P261 together coordinate carbamoyl phosphate.

The protein belongs to the aspartate/ornithine carbamoyltransferase superfamily. ATCase family. Heterooligomer of catalytic and regulatory chains.

The catalysed reaction is carbamoyl phosphate + L-aspartate = N-carbamoyl-L-aspartate + phosphate + H(+). Its pathway is pyrimidine metabolism; UMP biosynthesis via de novo pathway; (S)-dihydroorotate from bicarbonate: step 2/3. Functionally, catalyzes the condensation of carbamoyl phosphate and aspartate to form carbamoyl aspartate and inorganic phosphate, the committed step in the de novo pyrimidine nucleotide biosynthesis pathway. The sequence is that of Aspartate carbamoyltransferase catalytic subunit from Methanococcus maripaludis (strain C5 / ATCC BAA-1333).